Consider the following 306-residue polypeptide: BRCA2 and CDKN1A-interacting protein (306 aa).

The span at 1 to 10 (MASRPKRRAV) shows a compositional bias: basic residues. The segment at 1–45 (MASRPKRRAVSRVPPALGDEEEEDEVEEQDEDDSDEEEDEEDEVV) is disordered. Over residues 18–45 (GDEEEEDEVEEQDEDDSDEEEDEEDEVV) the composition is skewed to acidic residues. Phosphoserine is present on residues Ser-34 and Ser-104. Residues 51–159 (IEFEAYSISD…EKSMVEQLDR (109 aa)) form an interaction with BRCA2 region. The tract at residues 153 to 251 (MVEQLDRLFN…NAEEEFFYEK (99 aa)) is interaction with CDKN1A. Ser-273 is subject to Phosphoserine.

It belongs to the BCP1 family. As to quaternary structure, interacts with BRCA2, CDKN1A and MTDH/LYRIC. Interacts with DCTN1/p150-glued and ACTR1A/ARP1. Interacts with alpha-, beta- and gamma-tubulins. Interacts with TENT5C; the interaction has no effect on TENT5C poly(A) polymerase function.

The protein localises to the nucleus. It localises to the cytoplasm. It is found in the cytoskeleton. Its subcellular location is the microtubule organizing center. The protein resides in the centrosome. The protein localises to the centriole. It localises to the spindle pole. In terms of biological role, during interphase, required for microtubule organizing and anchoring activities. During mitosis, required for the organization and stabilization of the spindle pole. May promote cell cycle arrest by enhancing the inhibition of CDK2 activity by CDKN1A. May be required for repair of DNA damage by homologous recombination in conjunction with BRCA2. May not be involved in non-homologous end joining (NHEJ). This Bos taurus (Bovine) protein is BRCA2 and CDKN1A-interacting protein (BCCIP).